A 327-amino-acid polypeptide reads, in one-letter code: Fumigatonoid B endoperoxide isomerase nvfE (327 aa).

Positions 1–22 are disordered; that stretch reads MGRDQVSHKRSQNSNVSEIPDL. Residues H152, D154, and H234 each contribute to the Fe cation site.

Belongs to the PhyH family. As to quaternary structure, homodimer. The cofactor is Fe cation.

The catalysed reaction is fumigatonoid B = fumigatonoid C. The protein operates within secondary metabolite biosynthesis; terpenoid biosynthesis. Functionally, fumigatonoid B endoperoxide isomerase; part of the gene cluster that mediates the biosynthesis of novofumigatonin, a heavily oxygenated meroterpenoid containing a unique orthoester moiety. The first step of the pathway is the synthesis of 3,5-dimethylorsellinic acid (DMOA) by the polyketide synthase nvfA via condensation of one acetyl-CoA starter unit with 3 malonyl-CoA units and 2 methylations. DMOA is then converted to farnesyl-DMOA by the farnesyltransferase nvfB. Epoxydation by FAD-dependent monooxygenase nvfK, followed by a protonation-initiated cyclization catalyzed by the terpene cyclase nvfL leads to the production of asnavolin H. The short chain dehydrogenase nvfC then as a 3-OH dehydrogenase of asnovolin H to yield chemesin D. There are two branches to synthesize asnovolin A from chemesin D. In one branch, chemesin D undergoes Baeyer-Villiger oxidation by nvfH, methylation by nvfJ, and enoyl reduction by the nvfM D enoylreductase that reduces the double bond between C-5'and C-6', to form respectively asnovolin I, asnovolin K, and asnovolin A. In the other branch, the methylation precedes the Baeyer-Villiger oxidation and the enoyl reduction to yield asnovolin A via the asnovolin J intermediate. Asnovolin A is further converted to fumigatonoid A by the Fe(II)/2-oxoglutarate-dependent dioxygenase nvfI that catalyzes an endoperoxidation reaction. The alpha/beta hydrolase nvfD then acts as an epimerase that converts fumigatonoid A to its C-5' epimer, which then undergoes spontaneous or nvfD-catalyzed lactonization. The following step utilizes the ketoreductase nvfG to produce fumigatonoid B. The dioxygenase nvfE further converts fumigatonoid B into fumigatonoid C. Finally the Fe(II)/2-oxoglutarate-dependent dioxygenase nvfF catalyzes two rounds of oxidation to transform fumigatonoid C into the end product, novofumigatonin A. The sequence is that of Fumigatonoid B endoperoxide isomerase nvfE from Aspergillus novofumigatus (strain IBT 16806).